Here is a 331-residue protein sequence, read N- to C-terminus: MKELLNRLISHETISTDEAKQVIFNISEGKYNDTQIAAFLTVYMMRSITIEELEGFRDALLELCIKVDLSAYNAVDLCGTGGDGKDTFNVSTTSSFVTAGAGVKVAKHGNYGVSSVSGSSNVMEYLGIKFSSDAGFLEKCIDQANICILHAPLFHPAMKNVGPVRKSLAVKTFFNMLGPMVNPAFPKNQLVGVFSLELARMYAYLYQNTDKNYTILHSLDGYDEISLTGETKSISNNSERILKASDFGVSELKQTEIAGGGSVESSAEILTNILKGKGSQAQNNVVCANAGMAIATSRNMSPHEGFAEAKESLESGKAFDSFKKLQKLSQN.

5-phospho-alpha-D-ribose 1-diphosphate contacts are provided by residues G79, 82 to 83 (GD), T87, 89 to 92 (NVST), 107 to 115 (KHGNYGVSS), and S119. G79 is an anthranilate binding site. S91 is a binding site for Mg(2+). N110 lines the anthranilate pocket. Anthranilate is bound at residue R165. D223 and E224 together coordinate Mg(2+).

It belongs to the anthranilate phosphoribosyltransferase family. In terms of assembly, homodimer. It depends on Mg(2+) as a cofactor.

The enzyme catalyses N-(5-phospho-beta-D-ribosyl)anthranilate + diphosphate = 5-phospho-alpha-D-ribose 1-diphosphate + anthranilate. It functions in the pathway amino-acid biosynthesis; L-tryptophan biosynthesis; L-tryptophan from chorismate: step 2/5. Its function is as follows. Catalyzes the transfer of the phosphoribosyl group of 5-phosphorylribose-1-pyrophosphate (PRPP) to anthranilate to yield N-(5'-phosphoribosyl)-anthranilate (PRA). The polypeptide is Anthranilate phosphoribosyltransferase (Christiangramia forsetii (strain DSM 17595 / CGMCC 1.15422 / KT0803) (Gramella forsetii)).